The primary structure comprises 486 residues: Glutamyl-tRNA(Gln) amidotransferase subunit A (486 aa).

Catalysis depends on charge relay system residues Lys78 and Ser153. Ser177 functions as the Acyl-ester intermediate in the catalytic mechanism.

This sequence belongs to the amidase family. GatA subfamily. Heterotrimer of A, B and C subunits.

The enzyme catalyses L-glutamyl-tRNA(Gln) + L-glutamine + ATP + H2O = L-glutaminyl-tRNA(Gln) + L-glutamate + ADP + phosphate + H(+). Allows the formation of correctly charged Gln-tRNA(Gln) through the transamidation of misacylated Glu-tRNA(Gln) in organisms which lack glutaminyl-tRNA synthetase. The reaction takes place in the presence of glutamine and ATP through an activated gamma-phospho-Glu-tRNA(Gln). This chain is Glutamyl-tRNA(Gln) amidotransferase subunit A, found in Ruminiclostridium cellulolyticum (strain ATCC 35319 / DSM 5812 / JCM 6584 / H10) (Clostridium cellulolyticum).